A 469-amino-acid polypeptide reads, in one-letter code: Glutamine synthetase (469 aa).

The region spanning 13–97 is the GS beta-grasp domain; the sequence is KEVRYVDLRF…LRCDIVEPAT (85 aa). The 365-residue stretch at 105–469 folds into the GS catalytic domain; it reads PRSIAKRAEA…PVEFDMYYSL (365 aa). The Mg(2+) site is built by glutamate 130 and glutamate 132. Glutamate 208 is a binding site for ATP. Residues glutamate 213 and glutamate 221 each contribute to the Mg(2+) site. L-glutamate is bound by residues 265 to 266 and glycine 266; that span reads NG. A Mg(2+)-binding site is contributed by histidine 270. ATP-binding positions include 272 to 274 and serine 274; that span reads HQS. Residues arginine 322, glutamate 328, and arginine 340 each contribute to the L-glutamate site. 3 residues coordinate ATP: arginine 340, arginine 345, and lysine 353. Position 358 (glutamate 358) interacts with Mg(2+). Arginine 360 provides a ligand contact to L-glutamate. At tyrosine 398 the chain carries O-AMP-tyrosine.

The protein belongs to the glutamine synthetase family. In terms of assembly, oligomer of 12 subunits arranged in the form of two hexameric ring. Mg(2+) is required as a cofactor.

It localises to the cytoplasm. The enzyme catalyses L-glutamate + NH4(+) + ATP = L-glutamine + ADP + phosphate + H(+). Its activity is regulated as follows. The activity of this enzyme could be controlled by adenylation under conditions of abundant glutamine. Functionally, catalyzes the ATP-dependent biosynthesis of glutamine from glutamate and ammonia. The chain is Glutamine synthetase from Methylococcus capsulatus (strain ATCC 33009 / NCIMB 11132 / Bath).